The sequence spans 1080 residues: ATP-dependent helicase/deoxyribonuclease subunit B (1080 aa).

It belongs to the helicase family. AddB/RexB type 2 subfamily. As to quaternary structure, heterodimer of AddA and RexB. Requires Mg(2+) as cofactor.

Its function is as follows. The heterodimer acts as both an ATP-dependent DNA helicase and an ATP-dependent, dual-direction single-stranded exonuclease. Recognizes the chi site generating a DNA molecule suitable for the initiation of homologous recombination. This subunit has 5' -&gt; 3' nuclease activity but not helicase activity. The sequence is that of ATP-dependent helicase/deoxyribonuclease subunit B from Streptococcus mutans serotype c (strain ATCC 700610 / UA159).